Consider the following 89-residue polypeptide: Cell division topological specificity factor (89 aa).

It belongs to the MinE family.

Prevents the cell division inhibition by proteins MinC and MinD at internal division sites while permitting inhibition at polar sites. This ensures cell division at the proper site by restricting the formation of a division septum at the midpoint of the long axis of the cell. This is Cell division topological specificity factor from Serratia proteamaculans (strain 568).